The chain runs to 274 residues: Thiamine kinase (274 aa).

The protein belongs to the thiamine kinase family.

It catalyses the reaction thiamine + ATP = thiamine phosphate + ADP + H(+). It participates in cofactor biosynthesis; thiamine diphosphate biosynthesis; thiamine phosphate from thiamine: step 1/1. Its function is as follows. Catalyzes the ATP-dependent phosphorylation of thiamine to thiamine phosphate. Is involved in thiamine salvage. In Shigella dysenteriae serotype 1 (strain Sd197), this protein is Thiamine kinase.